Consider the following 323-residue polypeptide: Aspartate carbamoyltransferase catalytic subunit (323 aa).

Residues Arg-71 and Thr-72 each contribute to the carbamoyl phosphate site. Lys-99 is an L-aspartate binding site. 3 residues coordinate carbamoyl phosphate: Arg-121, His-151, and Gln-154. Positions 184 and 239 each coordinate L-aspartate. 2 residues coordinate carbamoyl phosphate: Gly-280 and Pro-281.

It belongs to the aspartate/ornithine carbamoyltransferase superfamily. ATCase family. In terms of assembly, heterododecamer (2C3:3R2) of six catalytic PyrB chains organized as two trimers (C3), and six regulatory PyrI chains organized as three dimers (R2).

It carries out the reaction carbamoyl phosphate + L-aspartate = N-carbamoyl-L-aspartate + phosphate + H(+). The protein operates within pyrimidine metabolism; UMP biosynthesis via de novo pathway; (S)-dihydroorotate from bicarbonate: step 2/3. Catalyzes the condensation of carbamoyl phosphate and aspartate to form carbamoyl aspartate and inorganic phosphate, the committed step in the de novo pyrimidine nucleotide biosynthesis pathway. The polypeptide is Aspartate carbamoyltransferase catalytic subunit (Cupriavidus taiwanensis (strain DSM 17343 / BCRC 17206 / CCUG 44338 / CIP 107171 / LMG 19424 / R1) (Ralstonia taiwanensis (strain LMG 19424))).